Here is a 156-residue protein sequence, read N- to C-terminus: VapC ribonuclease AF_1683 (156 aa).

Residues 4-125 (LIDTGIFFGF…KLISYDSRFS (122 aa)) enclose the PINc domain. Mg(2+) is bound by residues aspartate 6 and aspartate 103.

It belongs to the PINc/VapC protein family. Requires Mg(2+) as cofactor.

Functionally, toxic component of a type II toxin-antitoxin (TA) system. An RNase. This Archaeoglobus fulgidus (strain ATCC 49558 / DSM 4304 / JCM 9628 / NBRC 100126 / VC-16) protein is VapC ribonuclease AF_1683.